A 539-amino-acid chain; its full sequence is MTGSKNKARAQAKLEKRASAQAKAAAEREAANAGRGAGKNRDKGKGKAGSKTDAVAEAKAGSKSKVVAETKEGARPESKAVAKGTSDFNHKAENKYARSARKDKPSSDSWFWAGEDSGINSWFWKGEEVSNNSVAKCENKPSTSIQARVEEHTPRTSHKSRSGAEEEEEENVIGNWFWEGDDTGFDSDPKPVFKIVKPQPVDEINEKDRPKDWSEVTIWPKAPAVTPAVLGYRSQDSSEGRPSSYIVLASNEEETSTTCTKNTRSSLQPIPEYPFGSDPCIQTLDEIRQQIKIREENGIKPFACPCKMECYLDSPEFEKLVNILKSTTDPLIHKIAQIAMGIHKVHPFAQEFINEVGVVTLIESLLSFSSPEVSIKKAVITLNSSGDDRQQMVEFHVKHMCKETVSFPLNSPGQQSGLKIIGQLTTESVHHYIVVSYFSELFHLLSQGNRKTRNLVLKVFLNMSENPKAARDMINMKALAALKLIFNQKEAKANLVSAVAIFINIKEHIRKGSIVVVDHLSYNTLTAIFREVKGIIERM.

A compositionally biased stretch (basic residues) spans 1 to 10; sequence MTGSKNKARA. 2 disordered regions span residues 1-111 and 132-170; these read MTGS…DSWF and NSVA…EEEE. 2 stretches are compositionally biased toward basic and acidic residues: residues 66–80 and 88–106; these read VVAE…ESKA and FNHK…DKPS. A compositionally biased stretch (polar residues) spans 132–146; that stretch reads NSVAKCENKPSTSIQ.

The protein belongs to the GPRASP family. In terms of assembly, homodimer.

Its subcellular location is the cytoplasm. The protein localises to the nucleus. Functionally, survival and differentiation promoting protein that plays a role in the regulation of neurosynaptogenesis. Induces phosphatase PP2A activity which results in APP dephosphorylation and inhibits BACE1-mediated processing of APP. This chain is G protein-coupled receptor associated sorting protein 3 (Gprasp3), found in Rattus norvegicus (Rat).